The primary structure comprises 546 residues: Chaperonin GroEL (546 aa).

ATP contacts are provided by residues 30–33 (TMGP), K51, 87–91 (DGTTT), G415, 478–480 (NAA), and D494.

Belongs to the chaperonin (HSP60) family. As to quaternary structure, forms a cylinder of 14 subunits composed of two heptameric rings stacked back-to-back. Interacts with the co-chaperonin GroES.

It is found in the cytoplasm. The catalysed reaction is ATP + H2O + a folded polypeptide = ADP + phosphate + an unfolded polypeptide.. Its function is as follows. Together with its co-chaperonin GroES, plays an essential role in assisting protein folding. The GroEL-GroES system forms a nano-cage that allows encapsulation of the non-native substrate proteins and provides a physical environment optimized to promote and accelerate protein folding. The sequence is that of Chaperonin GroEL from Wolinella succinogenes (strain ATCC 29543 / DSM 1740 / CCUG 13145 / JCM 31913 / LMG 7466 / NCTC 11488 / FDC 602W) (Vibrio succinogenes).